Here is a 263-residue protein sequence, read N- to C-terminus: Small ribosomal subunit protein eS4 (263 aa).

The 63-residue stretch at L42–D104 folds into the S4 RNA-binding domain.

This sequence belongs to the eukaryotic ribosomal protein eS4 family.

The polypeptide is Small ribosomal subunit protein eS4 (RpS4) (Bombyx mori (Silk moth)).